A 283-amino-acid chain; its full sequence is Ribosomal RNA small subunit methyltransferase A (283 aa).

Residues Asn29, Leu31, Gly56, Glu77, Asp102, and Asn123 each contribute to the S-adenosyl-L-methionine site.

The protein belongs to the class I-like SAM-binding methyltransferase superfamily. rRNA adenine N(6)-methyltransferase family. RsmA subfamily.

The protein localises to the cytoplasm. It catalyses the reaction adenosine(1518)/adenosine(1519) in 16S rRNA + 4 S-adenosyl-L-methionine = N(6)-dimethyladenosine(1518)/N(6)-dimethyladenosine(1519) in 16S rRNA + 4 S-adenosyl-L-homocysteine + 4 H(+). Specifically dimethylates two adjacent adenosines (A1518 and A1519) in the loop of a conserved hairpin near the 3'-end of 16S rRNA in the 30S particle. May play a critical role in biogenesis of 30S subunits. The polypeptide is Ribosomal RNA small subunit methyltransferase A (Acidobacterium capsulatum (strain ATCC 51196 / DSM 11244 / BCRC 80197 / JCM 7670 / NBRC 15755 / NCIMB 13165 / 161)).